A 356-amino-acid chain; its full sequence is Testis-expressed protein 19.1 (356 aa).

The segment at 1–78 (MCPPVSVRHG…WDAEPMEHLS (78 aa)) is interaction with LIRE1. Positions 59–72 (LSEEEEEEEVWDAE) are enriched in acidic residues. The disordered stretch occupies residues 59–107 (LSEEEEEEEVWDAEPMEHLSESESLESDSKQDAGSEQDAGSEPNTRSEQ). Residues 73 to 91 (PMEHLSESESLESDSKQDA) show a composition bias toward basic and acidic residues. Residues 139–186 (QWVVFSISVPTELLPQEAVPLDLGPEDVEWTQALPWRLDVLFPCSHRL) are important for interaction with piRNA.

Interacts with UBR2; does not lead to Tex19.1 degradation and stabilizes it. Interacts with piRNA-associated proteins DDX4, EDC4, MAEL, PIWIL1, PIWIL2, RANBP9 and TDRD6. Interacts with L1RE1.

Its subcellular location is the cytoplasm. Required during spermatogenesis and placenta development, participating in the repression of retrotransposable elements and prevent their mobilization. Collaborates with the Piwi-interacting RNA (piRNA) pathway, which mediates the repression of transposable elements during meiosis by forming complexes composed of piRNAs and Piwi proteins. Interacts with Piwi proteins and directly binds piRNAs, a class of 24 to 30 nucleotide RNAs that are generated by a Dicer-independent mechanism and are primarily derived from transposons and other repeated sequence elements. Also during spermatogenesis, promotes, with UBR2, SPO11-dependent recombination foci to accumulate and drive robust homologous chromosome synapsis. Interacts with LINE-1 retrotransposon encoded LIRE1, stimulates LIRE1 polyubiquitination, mediated by UBR2, and degradation, inhibiting LINE-1 retrotransposon mobilization. This Rattus norvegicus (Rat) protein is Testis-expressed protein 19.1 (Tex19.1).